Reading from the N-terminus, the 218-residue chain is Small ribosomal subunit protein uS5 (218 aa).

A disordered region spans residues 1–49 (MPGRQRRDGGSGPAGQNGPNTGDNRGGGDRRGGGRDDRRGGQSAEKSNH). A compositionally biased stretch (basic and acidic residues) spans 26–49 (GGGDRRGGGRDDRRGGQSAEKSNH). In terms of domain architecture, S5 DRBM spans 49–112 (HIERVVTINR…EEARKSFFRV (64 aa)).

It belongs to the universal ribosomal protein uS5 family. Part of the 30S ribosomal subunit. Contacts proteins S4 and S8.

In terms of biological role, with S4 and S12 plays an important role in translational accuracy. Its function is as follows. Located at the back of the 30S subunit body where it stabilizes the conformation of the head with respect to the body. In Rhodococcus jostii (strain RHA1), this protein is Small ribosomal subunit protein uS5.